The sequence spans 305 residues: GPI-anchored hemophore cfmA (305 aa).

A signal peptide spans 1 to 18 (MKASVSLLLLSAASMASA). In terms of domain architecture, CFEM spans 19–111 (AMSVSQCAQM…GSGSGSDSGS (93 aa)). Intrachain disulfides connect cysteine 25–cysteine 68, cysteine 29–cysteine 63, cysteine 42–cysteine 49, and cysteine 51–cysteine 84. Aspartate 46 contributes to the heme binding site. Positions 92-287 (TATGAGGSSS…STGNVAPRGA (196 aa)) are disordered. The segment covering 95–149 (GAGGSSSGSGSGSDSGSGSGSGSGSGSGSGSGSGSSSGSGSGSGSGSGSGSGSNS) has biased composition (gly residues). Low complexity-rich tracts occupy residues 150 to 186 (GSGS…NSTT), 196 to 259 (GASS…TATG), and 267 to 287 (GSAS…PRGA). N-linked (GlcNAc...) asparagine glycosylation is found at asparagine 183, asparagine 203, asparagine 237, asparagine 243, and asparagine 275. Serine 276 is lipidated: GPI-like-anchor amidated serine. A propeptide spans 277-305 (SSTGNVAPRGAVVGSGAVGALALAALIIL) (removed in mature form).

Belongs to the RBT5 family. In terms of processing, the GPI-like anchor contains a phosphoceramide lipid group. The GPI-anchor is attached to the protein in the endoplasmic reticulum and serves to target the protein to the cell surface. There, the glucosamine-inositol phospholipid moiety is cleaved off and the GPI-modified mannoprotein is covalently attached via its lipidless GPI glycan remnant to the 1,6-beta-glucan of the outer cell wall layer.

Its subcellular location is the secreted. It localises to the cell wall. The protein localises to the cell membrane. In terms of biological role, GPI-anchored cell wall protein involved in stabilizing the cell wall. Not implicated in virulence, heme uptake and biofilm formation. This chain is GPI-anchored hemophore cfmA, found in Aspergillus fumigatus (strain ATCC MYA-4609 / CBS 101355 / FGSC A1100 / Af293) (Neosartorya fumigata).